A 163-amino-acid chain; its full sequence is ATP synthase subunit b 1 (163 aa).

Residues 7-27 form a helical membrane-spanning segment; sequence AETWVAIAFVILLGVFAYLGV.

The protein belongs to the ATPase B chain family. As to quaternary structure, F-type ATPases have 2 components, F(1) - the catalytic core - and F(0) - the membrane proton channel. F(1) has five subunits: alpha(3), beta(3), gamma(1), delta(1), epsilon(1). F(0) has three main subunits: a(1), b(2) and c(10-14). The alpha and beta chains form an alternating ring which encloses part of the gamma chain. F(1) is attached to F(0) by a central stalk formed by the gamma and epsilon chains, while a peripheral stalk is formed by the delta and b chains.

The protein resides in the cell inner membrane. In terms of biological role, f(1)F(0) ATP synthase produces ATP from ADP in the presence of a proton or sodium gradient. F-type ATPases consist of two structural domains, F(1) containing the extramembraneous catalytic core and F(0) containing the membrane proton channel, linked together by a central stalk and a peripheral stalk. During catalysis, ATP synthesis in the catalytic domain of F(1) is coupled via a rotary mechanism of the central stalk subunits to proton translocation. Functionally, component of the F(0) channel, it forms part of the peripheral stalk, linking F(1) to F(0). This Rhodopseudomonas palustris (strain ATCC BAA-98 / CGA009) protein is ATP synthase subunit b 1.